A 402-amino-acid polypeptide reads, in one-letter code: CD2 homolog (402 aa).

The N-terminal stretch at 1 to 16 (MIIIVIFLMCLKIVLN) is a signal peptide. Over 17 to 204 (NIIIWSTLNQ…ILKYQNYLST (188 aa)) the chain is Extracellular. N-linked (GlcNAc...) asparagine; by host glycosylation is found at Asn-25, Asn-37, Asn-52, Asn-55, Asn-72, Asn-77, Asn-81, Asn-89, Asn-95, Asn-108, Asn-125, Asn-137, Asn-148, Asn-153, Asn-169, Asn-177, Asn-184, and Asn-190. 2 disulfides stabilise this stretch: Cys-126-Cys-191 and Cys-133-Cys-174. Residues 205 to 225 (LFYIIIFIVSGLIIGIFISII) form a helical membrane-spanning segment. Over 226–402 (SVLSIRRKRK…ISLIHVDRII (177 aa)) the chain is Cytoplasmic. Positions 238 to 276 (VEEIESPPPSESNEEDISHDDTTSIHEPSPREPLLPKPY) are disordered. Basic and acidic residues predominate over residues 256–267 (HDDTTSIHEPSP). 11 tandem repeats follow at residues 302–307 (KPCPPP), 308–313 (KPCPPP), 314–319 (KPCPPP), 320–325 (KPCPPP), 326–331 (KPCSPP), 332–337 (KPCRPP), 338–343 (KPCPPP), 344–349 (KPCPPP), 350–355 (KPCPPP), 356–361 (KPCPPS), and 362–367 (KPCPSP). The 11 X 6 AA tandem repeats of K-P-C-[PRS]-[P]-[PS] stretch occupies residues 302-367 (KPCPPPKPCP…CPPSKPCPSP (66 aa)). Residues 319 to 386 (PKPCPPPKPC…PSIPLLPNIP (68 aa)) are compositionally biased toward pro residues. The interval 319-388 (PKPCPPPKPC…IPLLPNIPPL (70 aa)) is disordered.

This sequence belongs to the asfivirus CD2 homolog protein family. As to quaternary structure, both glycosylated and nonglycosylated forms interact (via C-terminus) with the host AP-1 complex. In terms of processing, cleaved into two fragments of 63 kDa and 26 kDa containing respectively the glycosylated N-terminus and the nonglycosylated C-terminus. A full-length 89-kDa glycosylated form also exists.

Its subcellular location is the host cell membrane. It localises to the virion membrane. The protein localises to the host Golgi apparatus. Its function is as follows. May play an immunosuppressive role by inhibiting lymphocyte proliferation and subsequently facilitating viral replication and generalization of infection. Responsible for viral hemadsorption, which may help viral spread. Increases virus replication in the tick vector at the step of virus uptake or replication in the tick gut. May play a role in the host Golgi reorganization to yield viral factories. May play a role in host cell penetration. This chain is CD2 homolog, found in Ornithodoros (relapsing fever ticks).